A 376-amino-acid polypeptide reads, in one-letter code: Mitogen-activated protein kinase 2 (376 aa).

Residues 32 to 319 (YVPIKPIGRG…VTEALQHPYM (288 aa)) enclose the Protein kinase domain. ATP-binding positions include 38 to 46 (IGRGAYGVV) and K61. Catalysis depends on D158, which acts as the Proton acceptor. T191 carries the post-translational modification Phosphothreonine. Residues 191-193 (TEY) carry the TXY motif. Position 193 is a phosphotyrosine (Y193). Residue T196 is modified to Phosphothreonine.

The protein belongs to the protein kinase superfamily. CMGC Ser/Thr protein kinase family. MAP kinase subfamily. Interacts with MKK3. In terms of processing, dually phosphorylated on Thr-191 and Tyr-193, which activates the enzyme. Phosphorylated on Ser residue. As to expression, highest levels in the stem. Present in the leaf, root and flower, but not in seeds.

The catalysed reaction is L-seryl-[protein] + ATP = O-phospho-L-seryl-[protein] + ADP + H(+). It carries out the reaction L-threonyl-[protein] + ATP = O-phospho-L-threonyl-[protein] + ADP + H(+). Its activity is regulated as follows. Activated by threonine and tyrosine phosphorylation. This Arabidopsis thaliana (Mouse-ear cress) protein is Mitogen-activated protein kinase 2 (MPK2).